The primary structure comprises 479 residues: FK506-binding protein 4 (479 aa).

Disordered stretches follow at residues 39–106 (IDPD…ARKL), 141–162 (VKGKAPATDDDDEDAESDEGLD), and 205–367 (GNYV…KTTG). Composition is skewed to acidic residues over residues 40–49 (DPDEAPEFDD), 68–93 (LDEEDSDDDYEDEDDSEDDSEDDEEV), 148–162 (TDDDDEDAESDEGLD), and 214–256 (PRDD…DLDG). 3 stretches are compositionally biased toward basic and acidic residues: residues 272-299 (APKLVDAKGKKKRGADEAALEAKDDKAK), 325-334 (AKPEQKETKK), and 348-364 (SKERKPDEKKPADKAEK). The region spanning 393–479 (GNTVAMRYIG…IFDVKLLEIK (87 aa)) is the PPIase FKBP-type domain.

The protein belongs to the FKBP-type PPIase family. FKBP3/4 subfamily. In terms of assembly, binds to histones H3 and H4.

Its subcellular location is the nucleus. It carries out the reaction [protein]-peptidylproline (omega=180) = [protein]-peptidylproline (omega=0). Its activity is regulated as follows. Inhibited by both FK506 and rapamycin. Functionally, PPIase that acts as a histone chaperone. Histone proline isomerase that increases the rate of cis-trans isomerization at prolines on the histone H3 N-terminal tail. Proline isomerization influences H3 methylation thereby regulating gene expression. The sequence is that of FK506-binding protein 4 (fpr4) from Emericella nidulans (strain FGSC A4 / ATCC 38163 / CBS 112.46 / NRRL 194 / M139) (Aspergillus nidulans).